Reading from the N-terminus, the 235-residue chain is Putative N-acetylmannosamine-6-phosphate 2-epimerase (235 aa).

Belongs to the NanE family.

The catalysed reaction is an N-acyl-D-glucosamine 6-phosphate = an N-acyl-D-mannosamine 6-phosphate. The protein operates within amino-sugar metabolism; N-acetylneuraminate degradation; D-fructose 6-phosphate from N-acetylneuraminate: step 3/5. Converts N-acetylmannosamine-6-phosphate (ManNAc-6-P) to N-acetylglucosamine-6-phosphate (GlcNAc-6-P). This Enterobacter sp. (strain 638) protein is Putative N-acetylmannosamine-6-phosphate 2-epimerase.